The primary structure comprises 142 residues: Endoribonuclease YbeY (142 aa).

His100, His104, and His110 together coordinate Zn(2+).

This sequence belongs to the endoribonuclease YbeY family. It depends on Zn(2+) as a cofactor.

It localises to the cytoplasm. In terms of biological role, single strand-specific metallo-endoribonuclease involved in late-stage 70S ribosome quality control and in maturation of the 3' terminus of the 16S rRNA. In Helicobacter pylori (strain G27), this protein is Endoribonuclease YbeY.